The primary structure comprises 1270 residues: DNA-directed RNA polymerase subunit beta (1270 aa).

Belongs to the RNA polymerase beta chain family. The RNAP catalytic core consists of 2 alpha, 1 beta, 1 beta' and 1 omega subunit. When a sigma factor is associated with the core the holoenzyme is formed, which can initiate transcription.

It catalyses the reaction RNA(n) + a ribonucleoside 5'-triphosphate = RNA(n+1) + diphosphate. Functionally, DNA-dependent RNA polymerase catalyzes the transcription of DNA into RNA using the four ribonucleoside triphosphates as substrates. The protein is DNA-directed RNA polymerase subunit beta of Flavobacterium psychrophilum (strain ATCC 49511 / DSM 21280 / CIP 103535 / JIP02/86).